A 1279-amino-acid polypeptide reads, in one-letter code: Amylopullulanase (1279 aa).

An N-terminal signal peptide occupies residues Met1 to Ala35. Residues Asp248, Asn250, Asp288, Asp343, Asn401, Asp403, Asn406, Asp407, Gly452, and Asp454 each coordinate Ca(2+). The substrate site is built by His527 and Arg627. The active-site Nucleophile is the Asp629. Glu658 (proton donor) is an active-site residue. Substrate is bound by residues His734–Asp735, Asp794, and Arg798. Fibronectin type-III domains lie at Ala930–Ile1022 and Lys1158–Ile1252.

Belongs to the glycosyl hydrolase 13 family. Requires Ca(2+) as cofactor.

The enzyme catalyses Endohydrolysis of (1-&gt;4)-alpha-D-glucosidic linkages in polysaccharides containing three or more (1-&gt;4)-alpha-linked D-glucose units.. It catalyses the reaction Hydrolysis of (1-&gt;6)-alpha-D-glucosidic linkages in pullulan, amylopectin and glycogen, and in the alpha- and beta-limit dextrins of amylopectin and glycogen.. This chain is Amylopullulanase (apu), found in Thermoanaerobacterium saccharolyticum.